Reading from the N-terminus, the 721-residue chain is Dipeptidyl-peptidase 5 (721 aa).

An N-terminal signal peptide occupies residues 1 to 18; the sequence is MGAFRWLSIAAAASTALA. Asparagine 75, asparagine 94, asparagine 151, and asparagine 254 each carry an N-linked (GlcNAc...) asparagine glycan. A disordered region spans residues 271-297; it reads ARPINGPDSPGTPKGIKGDSSSPVFSP. N-linked (GlcNAc...) asparagine glycosylation is found at asparagine 380 and asparagine 450. The active-site Charge relay system is serine 560. A glycan (N-linked (GlcNAc...) asparagine) is linked at asparagine 607. Catalysis depends on charge relay system residues aspartate 643 and histidine 675.

Belongs to the peptidase S9C family. N-glycosylated. Expressed in mycelia and conidia.

The protein resides in the secreted. Functionally, may be involved in metabolism of dipeptides or may affect host defense mechanisms. Has a substrate specificity limited to the hydrolysis of X-Ala, His-Ser, and Ser-Tyr dipeptides at a neutral pH optimum. This Aspergillus fumigatus (strain ATCC MYA-4609 / CBS 101355 / FGSC A1100 / Af293) (Neosartorya fumigata) protein is Dipeptidyl-peptidase 5.